The chain runs to 194 residues: Peptidyl-tRNA hydrolase (194 aa).

Residue Y17 participates in tRNA binding. H22 acts as the Proton acceptor in catalysis. Residues Y68, N70, and N116 each coordinate tRNA.

It belongs to the PTH family. In terms of assembly, monomer.

The protein resides in the cytoplasm. It catalyses the reaction an N-acyl-L-alpha-aminoacyl-tRNA + H2O = an N-acyl-L-amino acid + a tRNA + H(+). Hydrolyzes ribosome-free peptidyl-tRNAs (with 1 or more amino acids incorporated), which drop off the ribosome during protein synthesis, or as a result of ribosome stalling. In terms of biological role, catalyzes the release of premature peptidyl moieties from peptidyl-tRNA molecules trapped in stalled 50S ribosomal subunits, and thus maintains levels of free tRNAs and 50S ribosomes. This Pseudomonas aeruginosa (strain LESB58) protein is Peptidyl-tRNA hydrolase.